The chain runs to 31 residues: Cyclotide psybry C (31 aa).

The cyclopeptide (Gly-Asn) cross-link spans 1–31 (GFNPCGETCQIDQTCHAPGCTCSIANICVRN). Cystine bridges form between C5–C20, C9–C22, and C15–C28.

Post-translationally, this is a cyclic peptide.

Its function is as follows. Probably participates in a plant defense mechanism. This chain is Cyclotide psybry C, found in Psychotria brachyceras.